A 501-amino-acid polypeptide reads, in one-letter code: Putative lon protease homolog (501 aa).

53–60 contributes to the ATP binding site; that stretch reads GPPGIGKS. A compositionally biased stretch (polar residues) spans 481-494; that stretch reads SSSQRMSQHGYSSE. The segment at 481 to 501 is disordered; the sequence is SSSQRMSQHGYSSENIDRSYM.

Belongs to the peptidase S16 family.

The protein is Putative lon protease homolog of Methanothermobacter thermautotrophicus (strain ATCC 29096 / DSM 1053 / JCM 10044 / NBRC 100330 / Delta H) (Methanobacterium thermoautotrophicum).